The sequence spans 156 residues: D-aminoacyl-tRNA deacylase (156 aa).

The short motif at 142-143 is the Gly-cisPro motif, important for rejection of L-amino acids element; sequence GP.

This sequence belongs to the DTD family. As to quaternary structure, homodimer.

The protein resides in the cytoplasm. It carries out the reaction glycyl-tRNA(Ala) + H2O = tRNA(Ala) + glycine + H(+). The catalysed reaction is a D-aminoacyl-tRNA + H2O = a tRNA + a D-alpha-amino acid + H(+). Functionally, an aminoacyl-tRNA editing enzyme that deacylates mischarged D-aminoacyl-tRNAs. Also deacylates mischarged glycyl-tRNA(Ala), protecting cells against glycine mischarging by AlaRS. Acts via tRNA-based rather than protein-based catalysis; rejects L-amino acids rather than detecting D-amino acids in the active site. By recycling D-aminoacyl-tRNA to D-amino acids and free tRNA molecules, this enzyme counteracts the toxicity associated with the formation of D-aminoacyl-tRNA entities in vivo and helps enforce protein L-homochirality. This is D-aminoacyl-tRNA deacylase from Cupriavidus metallidurans (strain ATCC 43123 / DSM 2839 / NBRC 102507 / CH34) (Ralstonia metallidurans).